A 201-amino-acid chain; its full sequence is Guanylyl cyclase-activating protein 1 (201 aa).

Glycine 2 is lipidated: N-myristoyl glycine. Asparagine 3 is modified (deamidated asparagine). 4 EF-hand domains span residues 31–49 (SGQLTLYEFRQFFGLKNLS), 51–86 (SASQYVEQMFETFDFNKDGYIDFMEYVAALSLVLKG), 87–122 (KVEQKLRWYFKLYDVDGNGCIDRDELLTIIQAIRAI), and 131–166 (TAEEFTDTVFSKIDVNGDGELSLEEFIEGVQKDQML). Aspartate 64, asparagine 66, aspartate 68, tyrosine 70, glutamate 75, aspartate 100, aspartate 102, asparagine 104, cysteine 106, glutamate 111, aspartate 144, asparagine 146, aspartate 148, glutamate 150, and glutamate 155 together coordinate Ca(2+).

Homodimer. In the retina, it is expressed in rod and cone photoreceptors.

It is found in the membrane. Its subcellular location is the photoreceptor inner segment. The protein resides in the cell projection. The protein localises to the cilium. It localises to the photoreceptor outer segment. Its function is as follows. Stimulates retinal guanylyl cyclase when free calcium ions concentration is low and inhibits guanylyl cyclase when free calcium ions concentration is elevated. This Ca(2+)-sensitive regulation of retinal guanylyl cyclase is a key event in recovery of the dark state of rod photoreceptors following light exposure. May be involved in cone photoreceptor light response and recovery of response in bright light. This is Guanylyl cyclase-activating protein 1 (GUCA1A) from Homo sapiens (Human).